The following is a 195-amino-acid chain: Protein GrpE (195 aa).

It belongs to the GrpE family. Homodimer.

It localises to the cytoplasm. Participates actively in the response to hyperosmotic and heat shock by preventing the aggregation of stress-denatured proteins, in association with DnaK and GrpE. It is the nucleotide exchange factor for DnaK and may function as a thermosensor. Unfolded proteins bind initially to DnaJ; upon interaction with the DnaJ-bound protein, DnaK hydrolyzes its bound ATP, resulting in the formation of a stable complex. GrpE releases ADP from DnaK; ATP binding to DnaK triggers the release of the substrate protein, thus completing the reaction cycle. Several rounds of ATP-dependent interactions between DnaJ, DnaK and GrpE are required for fully efficient folding. This chain is Protein GrpE, found in Blochmanniella floridana.